The primary structure comprises 568 residues: Dihydroxy-acid dehydratase (568 aa).

C59 lines the [2Fe-2S] cluster pocket. D91 is a Mg(2+) binding site. C132 is a [2Fe-2S] cluster binding site. Residues D133 and K134 each coordinate Mg(2+). At K134 the chain carries N6-carboxylysine. C204 is a [2Fe-2S] cluster binding site. E456 lines the Mg(2+) pocket. S482 serves as the catalytic Proton acceptor.

This sequence belongs to the IlvD/Edd family. In terms of assembly, homodimer. [2Fe-2S] cluster is required as a cofactor. The cofactor is Mg(2+).

The catalysed reaction is (2R)-2,3-dihydroxy-3-methylbutanoate = 3-methyl-2-oxobutanoate + H2O. The enzyme catalyses (2R,3R)-2,3-dihydroxy-3-methylpentanoate = (S)-3-methyl-2-oxopentanoate + H2O. It participates in amino-acid biosynthesis; L-isoleucine biosynthesis; L-isoleucine from 2-oxobutanoate: step 3/4. It functions in the pathway amino-acid biosynthesis; L-valine biosynthesis; L-valine from pyruvate: step 3/4. Functionally, functions in the biosynthesis of branched-chain amino acids. Catalyzes the dehydration of (2R,3R)-2,3-dihydroxy-3-methylpentanoate (2,3-dihydroxy-3-methylvalerate) into 2-oxo-3-methylpentanoate (2-oxo-3-methylvalerate) and of (2R)-2,3-dihydroxy-3-methylbutanoate (2,3-dihydroxyisovalerate) into 2-oxo-3-methylbutanoate (2-oxoisovalerate), the penultimate precursor to L-isoleucine and L-valine, respectively. The polypeptide is Dihydroxy-acid dehydratase (Verminephrobacter eiseniae (strain EF01-2)).